Reading from the N-terminus, the 247-residue chain is ATP synthase subunit a, chloroplastic (247 aa).

5 helical membrane passes run 38-58 (QVLI…TLAV), 95-115 (VPFI…GALL), 134-154 (INTT…AGIS), 199-219 (LVVV…VMFL), and 220-240 (GLFT…AYIG).

The protein belongs to the ATPase A chain family. In terms of assembly, F-type ATPases have 2 components, CF(1) - the catalytic core - and CF(0) - the membrane proton channel. CF(1) has five subunits: alpha(3), beta(3), gamma(1), delta(1), epsilon(1). CF(0) has four main subunits: a, b, b' and c.

It is found in the plastid. Its subcellular location is the chloroplast thylakoid membrane. In terms of biological role, key component of the proton channel; it plays a direct role in the translocation of protons across the membrane. The polypeptide is ATP synthase subunit a, chloroplastic (Daucus carota (Wild carrot)).